Reading from the N-terminus, the 137-residue chain is 15 kDa protein A (137 aa).

The first 20 residues, 1–20, serve as a signal peptide directing secretion; the sequence is MAGVWKVLVVLVGLAVVACA. 2 cysteine pairs are disulfide-bonded: Cys-77/Cys-88 and Cys-99/Cys-116.

Belongs to the cathelicidin family. As to expression, large granules of neutrophils.

The protein localises to the secreted. Its function is as follows. Binds to bacterial lipopolysaccharides (LPS), potentiates strongly the early antibacterial effects of BPI. Inhibits the late lethal action of BPI. This is 15 kDa protein A from Oryctolagus cuniculus (Rabbit).